The sequence spans 365 residues: Histidinol-phosphate aminotransferase (365 aa).

Residue K222 is modified to N6-(pyridoxal phosphate)lysine.

This sequence belongs to the class-II pyridoxal-phosphate-dependent aminotransferase family. Histidinol-phosphate aminotransferase subfamily. In terms of assembly, homodimer. Pyridoxal 5'-phosphate is required as a cofactor.

The enzyme catalyses L-histidinol phosphate + 2-oxoglutarate = 3-(imidazol-4-yl)-2-oxopropyl phosphate + L-glutamate. The protein operates within amino-acid biosynthesis; L-histidine biosynthesis; L-histidine from 5-phospho-alpha-D-ribose 1-diphosphate: step 7/9. This Geobacillus sp. (strain WCH70) protein is Histidinol-phosphate aminotransferase.